The primary structure comprises 132 residues: Small ribosomal subunit protein uS9 (132 aa).

The interval 101–132 (KRAGLLTRDPRMKERKKPGLKAARRSPQFSKR) is disordered. A compositionally biased stretch (basic residues) spans 113–132 (KERKKPGLKAARRSPQFSKR).

The protein belongs to the universal ribosomal protein uS9 family.

This chain is Small ribosomal subunit protein uS9, found in Staphylococcus aureus (strain USA300).